A 192-amino-acid polypeptide reads, in one-letter code: Phosphoheptose isomerase (192 aa).

The region spanning 34–192 (VVDAYKAGNK…VERELFVKGK (159 aa)) is the SIS domain. 49–51 (NGG) lines the substrate pocket. Residues His-58 and Glu-62 each coordinate Zn(2+). Substrate-binding positions include Glu-62, 91–92 (ND), 117–119 (STS), Ser-122, and Gln-169. Residues Gln-169 and His-177 each contribute to the Zn(2+) site.

The protein belongs to the SIS family. GmhA subfamily. Homotetramer. Zn(2+) serves as cofactor.

The protein resides in the cytoplasm. The catalysed reaction is 2 D-sedoheptulose 7-phosphate = D-glycero-alpha-D-manno-heptose 7-phosphate + D-glycero-beta-D-manno-heptose 7-phosphate. Its pathway is carbohydrate biosynthesis; D-glycero-D-manno-heptose 7-phosphate biosynthesis; D-glycero-alpha-D-manno-heptose 7-phosphate and D-glycero-beta-D-manno-heptose 7-phosphate from sedoheptulose 7-phosphate: step 1/1. Catalyzes the isomerization of sedoheptulose 7-phosphate in D-glycero-D-manno-heptose 7-phosphate. This is Phosphoheptose isomerase from Citrifermentans bemidjiense (strain ATCC BAA-1014 / DSM 16622 / JCM 12645 / Bem) (Geobacter bemidjiensis).